Reading from the N-terminus, the 150-residue chain is Large ribosomal subunit protein bL9 (150 aa).

The protein belongs to the bacterial ribosomal protein bL9 family.

Binds to the 23S rRNA. The polypeptide is Large ribosomal subunit protein bL9 (Saccharopolyspora erythraea (strain ATCC 11635 / DSM 40517 / JCM 4748 / NBRC 13426 / NCIMB 8594 / NRRL 2338)).